Reading from the N-terminus, the 601-residue chain is Glutathione-regulated potassium-efflux system protein KefB (601 aa).

Helical transmembrane passes span 4 to 24, 29 to 49, 55 to 75, 87 to 107, 111 to 131, 152 to 172, 177 to 197, 207 to 227, 230 to 250, 262 to 282, 284 to 304, 324 to 344, and 356 to 376; these read ADLL…VPLA, IGAV…GLGF, EILH…GLEL, IFGV…GLLM, FLWQ…TAMA, VLLF…LLAG, HFDW…LIGG, FIAA…LVLS, LFMD…GVLL, AIDP…GMSL, LGVL…LVVI, MQFA…FSTA, and ALLL…MKGI. The RCK N-terminal domain occupies 400 to 519; sequence KPQVIVVGFG…AGVTQFSRET (120 aa).

Belongs to the monovalent cation:proton antiporter 2 (CPA2) transporter (TC 2.A.37) family. KefB subfamily. As to quaternary structure, interacts with the regulatory subunit KefG.

The protein resides in the cell inner membrane. Its function is as follows. Pore-forming subunit of a potassium efflux system that confers protection against electrophiles. Catalyzes K(+)/H(+) antiport. The protein is Glutathione-regulated potassium-efflux system protein KefB of Salmonella paratyphi A (strain ATCC 9150 / SARB42).